A 308-amino-acid polypeptide reads, in one-letter code: UPF0026 protein HP_0117 (308 aa).

The Radical SAM core domain occupies 18–248; that stretch reads FGKSLGVDLS…SLPKRSITQA (231 aa). Residues C33, C37, and C40 each contribute to the [4Fe-4S] cluster site.

This sequence belongs to the UPF0026 family. [4Fe-4S] cluster is required as a cofactor.

The sequence is that of UPF0026 protein HP_0117 from Helicobacter pylori (strain ATCC 700392 / 26695) (Campylobacter pylori).